The sequence spans 757 residues: Cell cycle progression protein 1 (757 aa).

Residues 1–217 lie on the Cytoplasmic side of the membrane; that stretch reads MSENSSDSDS…KRQFSSGLNK (217 aa). Residues 1-308 form an interaction with MCF2L and SRC region; the sequence is MSENSSDSDS…QKTNLATENQ (308 aa). The disordered stretch occupies residues 152 to 207; the sequence is VFSSQPSDDESSSDETSNQPSPAFRRRRARKKTVSASESEDRLVAEQETEPSKELS. Positions 175 to 184 are enriched in basic residues; sequence FRRRRARKKT. Residue S186 is modified to Phosphoserine. Over residues 190-207 the composition is skewed to basic and acidic residues; that stretch reads SEDRLVAEQETEPSKELS. The chain crosses the membrane as a helical; Signal-anchor for type II membrane protein span at residues 218 to 238; the sequence is CVILALVIAISMGFGHFYGTI. At 239–757 the chain is on the lumenal side; the sequence is QIQKRQQLVR…YIKPCHYSSL (519 aa). Coiled-coil stretches lie at residues 248-272 and 306-450; these read RKIH…QESF and ENQY…LWER. Residues 458–468 are compositionally biased toward basic and acidic residues; sequence QNGKQGTDGKK. The segment at 458-483 is disordered; the sequence is QNGKQGTDGKKKGGRGSHRAKNKSKE. Residues 469-479 are compositionally biased toward basic residues; sequence KGGRGSHRAKN. A coiled-coil region spans residues 504-530; that stretch reads VRHHKEKIKQAKEAVKENLKKFSDSVK.

This sequence belongs to the CCPG1 family. As to quaternary structure, interacts with MCF2L. May interact with MCF2, ARHGEF1, BCR, VAV1 and FGD1, but not with TIAM1. Interacts with GTP-bound CDC42 and SRC.

It localises to the cytoplasmic granule membrane. Functionally, acts as an assembly platform for Rho protein signaling complexes. Limits guanine nucleotide exchange activity of MCF2L toward RHOA, which results in an inhibition of both its transcriptional activation ability and its transforming activity. Does not inhibit activity of MCF2L toward CDC42, or activity of MCF2 toward either RHOA or CDC42. May be involved in cell cycle regulation. In Homo sapiens (Human), this protein is Cell cycle progression protein 1 (CCPG1).